Reading from the N-terminus, the 133-residue chain is Fluoride-specific ion channel FluC (133 aa).

A run of 4 helical transmembrane segments spans residues 4-24, 35-55, 66-86, and 107-127; these read LLWIALGGSLGALCRYGLSVL, WGTLAANLVGCFLIGGLWVLA, VFIFTGGIGSLTTFSTYSLES, and VLGLVLVAIGAGCALFLLGGP. Na(+) is bound by residues Gly74 and Thr77.

It belongs to the fluoride channel Fluc/FEX (TC 1.A.43) family.

The protein resides in the cell inner membrane. It catalyses the reaction fluoride(in) = fluoride(out). Its activity is regulated as follows. Na(+) is not transported, but it plays an essential structural role and its presence is essential for fluoride channel function. In terms of biological role, fluoride-specific ion channel. Important for reducing fluoride concentration in the cell, thus reducing its toxicity. The polypeptide is Fluoride-specific ion channel FluC (Salinibacter ruber (strain DSM 13855 / M31)).